The sequence spans 343 residues: tRNA N6-adenosine threonylcarbamoyltransferase (343 aa).

His120 and His124 together coordinate Fe cation. Substrate contacts are provided by residues 142 to 146 (VVSGG), Asp175, Gly188, Asp192, and Asn281. Asp310 contacts Fe cation.

This sequence belongs to the KAE1 / TsaD family. Fe(2+) serves as cofactor.

The protein localises to the cytoplasm. The enzyme catalyses L-threonylcarbamoyladenylate + adenosine(37) in tRNA = N(6)-L-threonylcarbamoyladenosine(37) in tRNA + AMP + H(+). Required for the formation of a threonylcarbamoyl group on adenosine at position 37 (t(6)A37) in tRNAs that read codons beginning with adenine. Is involved in the transfer of the threonylcarbamoyl moiety of threonylcarbamoyl-AMP (TC-AMP) to the N6 group of A37, together with TsaE and TsaB. TsaD likely plays a direct catalytic role in this reaction. This Bacillus anthracis protein is tRNA N6-adenosine threonylcarbamoyltransferase.